The primary structure comprises 293 residues: Protein orai (293 aa).

Topologically, residues 1 to 122 (MPRSHDPSRV…RAQLKASSRT (122 aa)) are cytoplasmic. Residues 62–81 (STAGGGSRNGVGSKEGSVTS) form a disordered region. The chain crosses the membrane as a helical span at residues 123-141 (SALLAGFAMVCLVELQYDQ). The Extracellular segment spans residues 142–146 (STPKP). Residues 147–167 (LLIVLGVVTSLLVSVHLLALM) form a helical membrane-spanning segment. Residues 168–198 (MSTCILPYMEATGCTQDSPHIKLKFYIDLSW) are Cytoplasmic-facing. Residues 199 to 219 (LFSTCIGLLLFLVEIGVIFYV) traverse the membrane as a helical segment. Topologically, residues 220 to 230 (KFTAVGYPTAG) are extracellular. A helical transmembrane segment spans residues 231-251 (YITTAMLVPVGVVFVVFSYLI). Residues 252-293 (HKNRVSHSLGRFKHKVDTMKQFLDVEANLQKSTLAPSTIRDI) lie on the Cytoplasmic side of the membrane.

This sequence belongs to the Orai family. As to expression, expressed in gonad sheath cells, hypodermis, intestine and spermatheca. Coexpressed with stim-1.

The protein resides in the membrane. In terms of biological role, ca(2+) release-activated Ca(2+)-like (CRAC-like) channel subunit which mediates Ca(2+) influx and increase in Ca(2+)-selective current by synergy with the Ca(2+) sensor, stim-1. Required for Ca(2+) and IP3-dependent contractile activity of sheath cells and the spermatheca. Affects brood size and somatic cell function. The sequence is that of Protein orai (orai-1) from Caenorhabditis elegans.